Reading from the N-terminus, the 692-residue chain is Elongation factor G (692 aa).

Positions 8–282 (ENTRNIGIMA…AVIDYLPSPV (275 aa)) constitute a tr-type G domain. GTP contacts are provided by residues 17–24 (AHIDAGKT), 81–85 (DTPGH), and 135–138 (NKMD).

This sequence belongs to the TRAFAC class translation factor GTPase superfamily. Classic translation factor GTPase family. EF-G/EF-2 subfamily.

It localises to the cytoplasm. Catalyzes the GTP-dependent ribosomal translocation step during translation elongation. During this step, the ribosome changes from the pre-translocational (PRE) to the post-translocational (POST) state as the newly formed A-site-bound peptidyl-tRNA and P-site-bound deacylated tRNA move to the P and E sites, respectively. Catalyzes the coordinated movement of the two tRNA molecules, the mRNA and conformational changes in the ribosome. This is Elongation factor G from Lysinibacillus sphaericus (strain C3-41).